We begin with the raw amino-acid sequence, 503 residues long: von Willebrand factor A domain-containing protein 1 (503 aa).

The signal sequence occupies residues 1 to 21 (MEVRKALTCVFLTVFLCSGDA). Residues 36-213 (DVLFLLDSSG…IIGEDLRNSI (178 aa)) enclose the VWFA domain. Fibronectin type-III domains follow at residues 218–324 (RAER…TVNP) and 331–423 (LLSS…VLPA).

Homodimer or homomultimer; disulfide-linked.

Its subcellular location is the secreted. It localises to the extracellular space. The protein resides in the extracellular matrix. It is found in the basement membrane. Promotes matrix assembly. Involved in the organization of skeletal muscles and in the formation of neuromuscular junctions. The polypeptide is von Willebrand factor A domain-containing protein 1 (Danio rerio (Zebrafish)).